Reading from the N-terminus, the 201-residue chain is Transgelin (201 aa).

Ala-2 is modified (N-acetylalanine). The Calponin-homology (CH) domain maps to 24 to 137 (EELEERLVEW…RTVMALGSLA (114 aa)). The tract at residues 154–161 (KKAQEHKR) is could be involved in actin-binding. Residue Ser-166 is modified to Phosphoserine. The residue at position 172 (Lys-172) is an N6-acetyllysine. A Calponin-like repeat occupies 175 to 200 (IGLQMGSNRGASQAGMTGYGRPRQII). Ser-181 is modified (phosphoserine). An Omega-N-methylarginine modification is found at Arg-183.

The protein belongs to the calponin family. In terms of tissue distribution, smooth muscle and mesenchymal cells but not in skeletal muscle or lymphocytes.

It is found in the cytoplasm. In terms of biological role, actin cross-linking/gelling protein. This is Transgelin (Tagln) from Rattus norvegicus (Rat).